Reading from the N-terminus, the 341-residue chain is L-threonine 3-dehydrogenase (341 aa).

Cys-38 is a binding site for Zn(2+). Residues Thr-40 and His-43 each act as charge relay system in the active site. Residues His-63, Glu-64, Cys-93, Cys-96, Cys-99, and Cys-107 each coordinate Zn(2+). Residues Ile-175, Asp-195, Arg-200, 262–264, and 286–287 each bind NAD(+); these read LGI and IY.

The protein belongs to the zinc-containing alcohol dehydrogenase family. Homotetramer. The cofactor is Zn(2+).

It localises to the cytoplasm. The catalysed reaction is L-threonine + NAD(+) = (2S)-2-amino-3-oxobutanoate + NADH + H(+). It participates in amino-acid degradation; L-threonine degradation via oxydo-reductase pathway; glycine from L-threonine: step 1/2. Functionally, catalyzes the NAD(+)-dependent oxidation of L-threonine to 2-amino-3-ketobutyrate. The protein is L-threonine 3-dehydrogenase of Enterobacter sp. (strain 638).